Reading from the N-terminus, the 428-residue chain is Glutamate-1-semialdehyde 2,1-aminomutase 2 (428 aa).

K267 is subject to N6-(pyridoxal phosphate)lysine.

This sequence belongs to the class-III pyridoxal-phosphate-dependent aminotransferase family. HemL subfamily. As to quaternary structure, homodimer. Requires pyridoxal 5'-phosphate as cofactor.

It is found in the cytoplasm. The enzyme catalyses (S)-4-amino-5-oxopentanoate = 5-aminolevulinate. Its pathway is porphyrin-containing compound metabolism; protoporphyrin-IX biosynthesis; 5-aminolevulinate from L-glutamyl-tRNA(Glu): step 2/2. This Oceanobacillus iheyensis (strain DSM 14371 / CIP 107618 / JCM 11309 / KCTC 3954 / HTE831) protein is Glutamate-1-semialdehyde 2,1-aminomutase 2.